The following is a 378-amino-acid chain: Ribosomal RNA large subunit methyltransferase G (378 aa).

It belongs to the methyltransferase superfamily. RlmG family.

It localises to the cytoplasm. The enzyme catalyses guanosine(1835) in 23S rRNA + S-adenosyl-L-methionine = N(2)-methylguanosine(1835) in 23S rRNA + S-adenosyl-L-homocysteine + H(+). Specifically methylates the guanine in position 1835 (m2G1835) of 23S rRNA. This chain is Ribosomal RNA large subunit methyltransferase G, found in Salmonella paratyphi B (strain ATCC BAA-1250 / SPB7).